The sequence spans 274 residues: Diaminopimelate epimerase (274 aa).

Residues N11, Q44, and N64 each coordinate substrate. C73 acts as the Proton donor in catalysis. Residues 74–75, N157, N190, and 208–209 each bind substrate; these read GN and ER. Residue C217 is the Proton acceptor of the active site. 218–219 contacts substrate; it reads GS.

This sequence belongs to the diaminopimelate epimerase family. In terms of assembly, homodimer.

The protein localises to the cytoplasm. The enzyme catalyses (2S,6S)-2,6-diaminopimelate = meso-2,6-diaminopimelate. It participates in amino-acid biosynthesis; L-lysine biosynthesis via DAP pathway; DL-2,6-diaminopimelate from LL-2,6-diaminopimelate: step 1/1. Its function is as follows. Catalyzes the stereoinversion of LL-2,6-diaminopimelate (L,L-DAP) to meso-diaminopimelate (meso-DAP), a precursor of L-lysine and an essential component of the bacterial peptidoglycan. This chain is Diaminopimelate epimerase, found in Yersinia enterocolitica serotype O:8 / biotype 1B (strain NCTC 13174 / 8081).